The primary structure comprises 548 residues: Chaperonin GroEL (548 aa).

Residues 30–33 (TLGP), lysine 51, 87–91 (DGTTT), glycine 415, 479–481 (NAA), and aspartate 495 contribute to the ATP site. The interval 526–548 (KEDKSSDLGSAPAGGMGGMGGMM) is disordered. The segment covering 537 to 548 (PAGGMGGMGGMM) has biased composition (gly residues).

Belongs to the chaperonin (HSP60) family. Forms a cylinder of 14 subunits composed of two heptameric rings stacked back-to-back. Interacts with the co-chaperonin GroES.

The protein resides in the cytoplasm. The catalysed reaction is ATP + H2O + a folded polypeptide = ADP + phosphate + an unfolded polypeptide.. Functionally, together with its co-chaperonin GroES, plays an essential role in assisting protein folding. The GroEL-GroES system forms a nano-cage that allows encapsulation of the non-native substrate proteins and provides a physical environment optimized to promote and accelerate protein folding. This is Chaperonin GroEL from Buchnera aphidicola subsp. Pterocomma populeum.